Reading from the N-terminus, the 143-residue chain is MFARILGLDVGTKTVGVSVSDLLGMTAQPVETIKIDSEAGELGFDRLAVLIKEYKPEKVVLGLPKHMNGDEGIRAEASRDYGTKLANEFSLEVAYQDERLTTAQAEKVLIDGGVRRKDRKKSIDKLAAVLILQNYLDAHALKL.

This sequence belongs to the YqgF nuclease family.

It localises to the cytoplasm. Functionally, could be a nuclease involved in processing of the 5'-end of pre-16S rRNA. The chain is Putative pre-16S rRNA nuclease from Lactococcus lactis subsp. cremoris (strain SK11).